The chain runs to 161 residues: Allophycocyanin alpha-B chain (161 aa).

N71 carries the post-translational modification N4-methylasparagine. Position 81 (C81) interacts with (2R,3E)-phycocyanobilin.

This sequence belongs to the phycobiliprotein family. In terms of processing, contains one covalently linked bilin chromophore.

It localises to the plastid. The protein localises to the chloroplast thylakoid membrane. Allophycocyanin is a photosynthetic bile pigment-protein complex with maximum absorption at approximately 650 nanometers. This chain is Allophycocyanin alpha-B chain (apcD), found in Pyropia yezoensis (Susabi-nori).